The primary structure comprises 623 residues: C2H2-type transcription factor zfpA (623 aa).

Over residues 202–219 the composition is skewed to polar residues; the sequence is GLAVSSPMPNSGPHSRSV. Disordered stretches follow at residues 202-256 and 468-493; these read GLAV…EKGR and SNKA…NGKA. A compositionally biased stretch (low complexity) spans 227–239; it reads SISSTNSRRSQLS. Residues 255–276 form a C2H2-type zinc finger; that stretch reads GRCPHPDCGRVFKDLKAHMLTH.

The protein localises to the nucleus. Transcription factor involved in fungal growth and virulence potential. Negatively regulates antifungal drug susceptibility via transcriptional inhibition of the expressions of drug efflux pumps in a crzA-dependent way. Under the treatment of azoles, both zfpA and crzA transfer to nuclei and coregulate the expression of multidrug transporters and then keep normal drug susceptibility in fungal cells. The chain is C2H2-type transcription factor zfpA from Aspergillus fumigatus (strain CBS 144.89 / FGSC A1163 / CEA10) (Neosartorya fumigata).